We begin with the raw amino-acid sequence, 243 residues long: 3-deoxy-manno-octulosonate cytidylyltransferase (243 aa).

The protein belongs to the KdsB family.

The protein localises to the cytoplasm. The enzyme catalyses 3-deoxy-alpha-D-manno-oct-2-ulosonate + CTP = CMP-3-deoxy-beta-D-manno-octulosonate + diphosphate. It functions in the pathway nucleotide-sugar biosynthesis; CMP-3-deoxy-D-manno-octulosonate biosynthesis; CMP-3-deoxy-D-manno-octulosonate from 3-deoxy-D-manno-octulosonate and CTP: step 1/1. Functionally, activates KDO (a required 8-carbon sugar) for incorporation into bacterial lipopolysaccharide in Gram-negative bacteria. The sequence is that of 3-deoxy-manno-octulosonate cytidylyltransferase from Wigglesworthia glossinidia brevipalpis.